We begin with the raw amino-acid sequence, 400 residues long: Elongation factor Tu (400 aa).

The 199-residue stretch at 10–208 folds into the tr-type G domain; sequence KPHLNVGTIG…TMDSYFPEPQ (199 aa). The tract at residues 19–26 is G1; the sequence is GHIDHGKT. 19–26 contributes to the GTP binding site; that stretch reads GHIDHGKT. Threonine 26 is a binding site for Mg(2+). Residues 60-64 form a G2 region; it reads GITIN. Residues 81 to 84 form a G3 region; sequence DCPG. Residues 81–85 and 136–139 contribute to the GTP site; these read DCPGH and NKTD. The G4 stretch occupies residues 136–139; sequence NKTD. Residues 174–176 are G5; that stretch reads SAL.

It belongs to the TRAFAC class translation factor GTPase superfamily. Classic translation factor GTPase family. EF-Tu/EF-1A subfamily. As to quaternary structure, monomer.

It is found in the cytoplasm. It carries out the reaction GTP + H2O = GDP + phosphate + H(+). Functionally, GTP hydrolase that promotes the GTP-dependent binding of aminoacyl-tRNA to the A-site of ribosomes during protein biosynthesis. The chain is Elongation factor Tu from Thermosipho africanus (strain TCF52B).